The sequence spans 189 residues: Large ribosomal subunit protein uL6 (189 aa).

This sequence belongs to the universal ribosomal protein uL6 family. Part of the 50S ribosomal subunit.

This protein binds to the 23S rRNA, and is important in its secondary structure. It is located near the subunit interface in the base of the L7/L12 stalk, and near the tRNA binding site of the peptidyltransferase center. This Bacteroides thetaiotaomicron (strain ATCC 29148 / DSM 2079 / JCM 5827 / CCUG 10774 / NCTC 10582 / VPI-5482 / E50) protein is Large ribosomal subunit protein uL6.